A 215-amino-acid polypeptide reads, in one-letter code: NADH-quinone oxidoreductase subunit C (215 aa).

It belongs to the complex I 30 kDa subunit family. In terms of assembly, NDH-1 is composed of 14 different subunits. Subunits NuoB, C, D, E, F, and G constitute the peripheral sector of the complex.

Its subcellular location is the cell inner membrane. The enzyme catalyses a quinone + NADH + 5 H(+)(in) = a quinol + NAD(+) + 4 H(+)(out). Functionally, NDH-1 shuttles electrons from NADH, via FMN and iron-sulfur (Fe-S) centers, to quinones in the respiratory chain. The immediate electron acceptor for the enzyme in this species is believed to be ubiquinone. Couples the redox reaction to proton translocation (for every two electrons transferred, four hydrogen ions are translocated across the cytoplasmic membrane), and thus conserves the redox energy in a proton gradient. The polypeptide is NADH-quinone oxidoreductase subunit C (Bordetella parapertussis (strain 12822 / ATCC BAA-587 / NCTC 13253)).